A 95-amino-acid chain; its full sequence is Large ribosomal subunit protein bL25 (95 aa).

The protein belongs to the bacterial ribosomal protein bL25 family. As to quaternary structure, part of the 50S ribosomal subunit; part of the 5S rRNA/L5/L18/L25 subcomplex. Contacts the 5S rRNA. Binds to the 5S rRNA independently of L5 and L18.

This is one of the proteins that binds to the 5S RNA in the ribosome where it forms part of the central protuberance. The polypeptide is Large ribosomal subunit protein bL25 (Buchnera aphidicola subsp. Acyrthosiphon pisum (strain 5A)).